The chain runs to 396 residues: Elongation factor Tu (396 aa).

Residues 10–206 (KPHVNIGTIG…AVDESVPDPV (197 aa)) enclose the tr-type G domain. The G1 stretch occupies residues 19–26 (GHVDHGKT). A GTP-binding site is contributed by 19–26 (GHVDHGKT). A Mg(2+)-binding site is contributed by Thr26. The segment at 62–66 (GITIN) is G2. A G3 region spans residues 83 to 86 (DAPG). Residues 83 to 87 (DAPGH) and 138 to 141 (NKAD) each bind GTP. A G4 region spans residues 138–141 (NKAD). The interval 176-178 (SGL) is G5.

Belongs to the TRAFAC class translation factor GTPase superfamily. Classic translation factor GTPase family. EF-Tu/EF-1A subfamily. Monomer.

It localises to the cytoplasm. It catalyses the reaction GTP + H2O = GDP + phosphate + H(+). GTP hydrolase that promotes the GTP-dependent binding of aminoacyl-tRNA to the A-site of ribosomes during protein biosynthesis. The sequence is that of Elongation factor Tu from Arthrobacter sp. (strain FB24).